The primary structure comprises 74 residues: uncharacterized protein (74 aa).

Positions 1-19 (MIGLIVVPILFAIKGIVVG) are cleaved as a signal peptide. Residues 26–74 (KFGKHSNTKDQKEDKDEDKRQSISQRKQHTEWPIEENRIQRRAPNQSAL) form a disordered region. Basic and acidic residues-rich tracts occupy residues 32–46 (NTKDQKEDKDEDKRQ) and 53–64 (QHTEWPIEENRI).

This is an uncharacterized protein from Saccharomyces cerevisiae (strain ATCC 204508 / S288c) (Baker's yeast).